Reading from the N-terminus, the 141-residue chain is Nucleoside diphosphate kinase (141 aa).

ATP is bound by residues Lys-11, Phe-59, Arg-87, Thr-93, Arg-104, and Asn-114. The Pros-phosphohistidine intermediate role is filled by His-117.

This sequence belongs to the NDK family. Homotetramer. Mg(2+) is required as a cofactor.

Its subcellular location is the cytoplasm. It catalyses the reaction a 2'-deoxyribonucleoside 5'-diphosphate + ATP = a 2'-deoxyribonucleoside 5'-triphosphate + ADP. The catalysed reaction is a ribonucleoside 5'-diphosphate + ATP = a ribonucleoside 5'-triphosphate + ADP. In terms of biological role, major role in the synthesis of nucleoside triphosphates other than ATP. The ATP gamma phosphate is transferred to the NDP beta phosphate via a ping-pong mechanism, using a phosphorylated active-site intermediate. This chain is Nucleoside diphosphate kinase, found in Leptothrix cholodnii (strain ATCC 51168 / LMG 8142 / SP-6) (Leptothrix discophora (strain SP-6)).